The following is a 61-amino-acid chain: Large ribosomal subunit protein uL30 (61 aa).

This sequence belongs to the universal ribosomal protein uL30 family. Part of the 50S ribosomal subunit.

This Neisseria gonorrhoeae (strain ATCC 700825 / FA 1090) protein is Large ribosomal subunit protein uL30.